We begin with the raw amino-acid sequence, 293 residues long: Glutamyl-Q tRNA(Asp) synthetase (293 aa).

L-glutamate contacts are provided by residues 9–13 and glutamate 45; that span reads RFAPS. Residues 12 to 22 carry the 'HIGH' region motif; it reads PSPSGELHFGS. 4 residues coordinate Zn(2+): cysteine 101, cysteine 103, tyrosine 115, and cysteine 119. Positions 172 and 190 each coordinate L-glutamate. The 'KMSKS' region signature appears at 228–232; the sequence is KLSKQ. An ATP-binding site is contributed by lysine 231.

Belongs to the class-I aminoacyl-tRNA synthetase family. GluQ subfamily. It depends on Zn(2+) as a cofactor.

Functionally, catalyzes the tRNA-independent activation of glutamate in presence of ATP and the subsequent transfer of glutamate onto a tRNA(Asp). Glutamate is transferred on the 2-amino-5-(4,5-dihydroxy-2-cyclopenten-1-yl) moiety of the queuosine in the wobble position of the QUC anticodon. In Klebsiella pneumoniae (strain 342), this protein is Glutamyl-Q tRNA(Asp) synthetase.